Consider the following 465-residue polypeptide: 3-isopropylmalate dehydratase large subunit (465 aa).

The [4Fe-4S] cluster site is built by C347, C407, and C410. Residues 417–443 (TLKPGERSASTSNRNFEGRQGKGGRTH) are disordered.

This sequence belongs to the aconitase/IPM isomerase family. LeuC type 1 subfamily. As to quaternary structure, heterodimer of LeuC and LeuD. [4Fe-4S] cluster serves as cofactor.

The enzyme catalyses (2R,3S)-3-isopropylmalate = (2S)-2-isopropylmalate. It participates in amino-acid biosynthesis; L-leucine biosynthesis; L-leucine from 3-methyl-2-oxobutanoate: step 2/4. In terms of biological role, catalyzes the isomerization between 2-isopropylmalate and 3-isopropylmalate, via the formation of 2-isopropylmaleate. This chain is 3-isopropylmalate dehydratase large subunit, found in Thermobifida fusca (strain YX).